The primary structure comprises 216 residues: Probable RNA 2'-phosphotransferase 2 (216 aa).

It belongs to the KptA/TPT1 family.

Functionally, removes the 2'-phosphate from RNA via an intermediate in which the phosphate is ADP-ribosylated by NAD followed by a presumed transesterification to release the RNA and generate ADP-ribose 1''-2''-cyclic phosphate (APPR&gt;P). May function as an ADP-ribosylase. The protein is Probable RNA 2'-phosphotransferase 2 (kptA2) of Archaeoglobus fulgidus (strain ATCC 49558 / DSM 4304 / JCM 9628 / NBRC 100126 / VC-16).